Here is a 66-residue protein sequence, read N- to C-terminus: Ejaculatory bulb-specific protein 2 (66 aa).

An N-terminal signal peptide occupies residues 1-20; that stretch reads MIRILVLMITFTLMTGSALC.

As to expression, specifically expressed in the ejaculatory bulb and seminal fluid.

Its subcellular location is the secreted. Functionally, protein component of the posterior mating plug. In Drosophila melanogaster (Fruit fly), this protein is Ejaculatory bulb-specific protein 2.